Here is a 163-residue protein sequence, read N- to C-terminus: Lipoprotein signal peptidase (163 aa).

The next 3 helical transmembrane spans lie at 3 to 23 (IPLI…IIIL), 70 to 90 (NYIL…TMYN), and 94 to 114 (IENF…IGNF). Catalysis depends on residues Asp125 and Asp143. Residues 134-154 (WHFATFNIADVSIFIGSVLFI) form a helical membrane-spanning segment.

It belongs to the peptidase A8 family.

It localises to the cell membrane. It catalyses the reaction Release of signal peptides from bacterial membrane prolipoproteins. Hydrolyzes -Xaa-Yaa-Zaa-|-(S,diacylglyceryl)Cys-, in which Xaa is hydrophobic (preferably Leu), and Yaa (Ala or Ser) and Zaa (Gly or Ala) have small, neutral side chains.. It participates in protein modification; lipoprotein biosynthesis (signal peptide cleavage). Functionally, this protein specifically catalyzes the removal of signal peptides from prolipoproteins. This Buchnera aphidicola subsp. Baizongia pistaciae (strain Bp) protein is Lipoprotein signal peptidase.